Consider the following 179-residue polypeptide: Inosine/xanthosine triphosphatase (179 aa).

Glu71 contacts Mg(2+). A substrate-binding site is contributed by 71–72; sequence EA.

This sequence belongs to the YjjX NTPase family. As to quaternary structure, homodimer. It depends on Mg(2+) as a cofactor. Mn(2+) serves as cofactor.

The catalysed reaction is XTP + H2O = XDP + phosphate + H(+). It catalyses the reaction ITP + H2O = IDP + phosphate + H(+). Its function is as follows. Phosphatase that hydrolyzes non-canonical purine nucleotides such as XTP and ITP to their respective diphosphate derivatives. Probably excludes non-canonical purines from DNA/RNA precursor pool, thus preventing their incorporation into DNA/RNA and avoiding chromosomal lesions. The polypeptide is Inosine/xanthosine triphosphatase (Shewanella oneidensis (strain ATCC 700550 / JCM 31522 / CIP 106686 / LMG 19005 / NCIMB 14063 / MR-1)).